Consider the following 148-residue polypeptide: Arginine repressor (148 aa).

The protein belongs to the ArgR family.

Its subcellular location is the cytoplasm. It participates in amino-acid biosynthesis; L-arginine biosynthesis [regulation]. Regulates arginine biosynthesis genes. In Chlorobium phaeobacteroides (strain BS1), this protein is Arginine repressor.